Consider the following 498-residue polypeptide: Lysine--tRNA ligase (498 aa).

Mg(2+) contacts are provided by Glu408 and Glu415.

Belongs to the class-II aminoacyl-tRNA synthetase family. In terms of assembly, homodimer. It depends on Mg(2+) as a cofactor.

It is found in the cytoplasm. It catalyses the reaction tRNA(Lys) + L-lysine + ATP = L-lysyl-tRNA(Lys) + AMP + diphosphate. In Pediococcus pentosaceus (strain ATCC 25745 / CCUG 21536 / LMG 10740 / 183-1w), this protein is Lysine--tRNA ligase.